A 298-amino-acid chain; its full sequence is Ribosomal protein uL3 glutamine methyltransferase (298 aa).

Belongs to the protein N5-glutamine methyltransferase family. PrmB subfamily.

It carries out the reaction L-glutaminyl-[ribosomal protein uL3] + S-adenosyl-L-methionine = N(5)-methyl-L-glutaminyl-[ribosomal protein uL3] + S-adenosyl-L-homocysteine + H(+). Its function is as follows. Methylates large ribosomal subunit protein uL3 on a specific glutamine residue. In Bordetella pertussis (strain Tohama I / ATCC BAA-589 / NCTC 13251), this protein is Ribosomal protein uL3 glutamine methyltransferase.